The primary structure comprises 479 residues: Ribulose bisphosphate carboxylase large chain (479 aa).

Positions 1–2 (MS) are excised as a propeptide. Substrate-binding residues include asparagine 123 and threonine 173. Lysine 175 functions as the Proton acceptor in the catalytic mechanism. Residue lysine 177 coordinates substrate. Mg(2+) contacts are provided by lysine 201, aspartate 203, and glutamate 204. An N6-carboxylysine modification is found at lysine 201. Position 208 is a phosphoserine (serine 208). Histidine 294 (proton acceptor) is an active-site residue. Substrate contacts are provided by arginine 295 and histidine 327. Threonine 330 carries the phosphothreonine modification. Serine 379 contacts substrate.

This sequence belongs to the RuBisCO large chain family. Type I subfamily. In terms of assembly, heterohexadecamer of 8 large chains and 8 small chains; disulfide-linked. The disulfide link is formed within the large subunit homodimers. Requires Mg(2+) as cofactor. In terms of processing, the disulfide bond which can form in the large chain dimeric partners within the hexadecamer appears to be associated with oxidative stress and protein turnover.

It localises to the plastid. Its subcellular location is the chloroplast. It catalyses the reaction 2 (2R)-3-phosphoglycerate + 2 H(+) = D-ribulose 1,5-bisphosphate + CO2 + H2O. The enzyme catalyses D-ribulose 1,5-bisphosphate + O2 = 2-phosphoglycolate + (2R)-3-phosphoglycerate + 2 H(+). RuBisCO catalyzes two reactions: the carboxylation of D-ribulose 1,5-bisphosphate, the primary event in carbon dioxide fixation, as well as the oxidative fragmentation of the pentose substrate in the photorespiration process. Both reactions occur simultaneously and in competition at the same active site. This Barbarea verna (Land cress) protein is Ribulose bisphosphate carboxylase large chain.